Consider the following 771-residue polypeptide: Solute carrier family 7 member 14 (771 aa).

A run of 6 helical transmembrane segments spans residues 58–78 (LISLGVGSCVGTGMYVVSGLV), 83–103 (AGPGVIVSFIIAAVASILSGV), 119–141 (AYTYSYVTVGEFVAFFIGWNLIL), 187–207 (YPDLLALVIAVIVTIIVALGV), 216–236 (VLNVLNLAVWVFIMIAGLFFI), and 251–271 (WSGVLQGAATCFYAFIGFDII). N-linked (GlcNAc...) asparagine glycosylation occurs at Asn-282. 4 helical membrane passes run 291–311 (ASLVICLTAYVSVSMILTLMV), 336–356 (FVVAIGSVAGLTVSLLGSLFP), 384–404 (PVVACIVSGFLAALLSLLVSL), and 407–427 (LIEMMSIGTLLAYTLVSVCVL). Residues Ser-465, Ser-468, Ser-475, and Ser-488 each carry the phosphoserine modification. 4 helical membrane-spanning segments follow: residues 565 to 585 (VTICVLLLFILMFIFCSFIIF), 596 to 616 (WAILLVVLMMLLISVLVFVIL), 628 to 648 (MAPCLPFVPAFAMLVNIYLML), and 655 to 675 (WIRFAVWCFVGMLIYFGYGIW). Asn-676 carries an N-linked (GlcNAc...) asparagine glycan. The disordered stretch occupies residues 735–771 (SDAKANSRTSSKAKSKSKHKQNSEALIANDELDCSPE). Basic residues predominate over residues 745–754 (SKAKSKSKHK). Residues Ser-757 and Ser-769 each carry the phosphoserine modification.

Belongs to the amino acid-polyamine-organocation (APC) superfamily. As to expression, expressed in retina, brain and spinal cord. In the retina, expressed in the inner nuclear layer and photoreceptor layer (at protein level). Expressed in liver, spleen, lung, kidney intestine and brain (at protein level).

It localises to the lysosome membrane. It carries out the reaction 4-aminobutanoate(in) = 4-aminobutanoate(out). Functionally, imports 4-aminobutanoate (GABA) into lysosomes. May act as a GABA sensor that regulates mTORC2-dependent INS signaling and gluconeogenesis. The transport mechanism and substrate selectivity remain to be elucidated. The sequence is that of Solute carrier family 7 member 14 from Mus musculus (Mouse).